The primary structure comprises 387 residues: O-methyltransferase lepI (387 aa).

135-148 contacts substrate; the sequence is FENLWPVLMALPDF. The substrate binding stretch occupies residues 175–195; the sequence is CFHWLATQPTRIANFKVLLTD. S-adenosyl-L-methionine contacts are provided by residues 227–228, Asp252, 275–276, and Arg291; these read GG and NF.

This sequence belongs to the class I-like SAM-binding methyltransferase superfamily. Cation-independent O-methyltransferase family.

In terms of biological role, O-methyltransferase; part of the gene cluster 23 that mediates the biosynthesis of a family of 2-pyridones known as leporins. The hybrid PKS-NRPS synthetase lepA and the enoyl reductase lepG are responsible for fusion of phenylalanine with a hexaketide and subsequent release of the stable tetramic acid precursor, pre-leporin C. Because lepA lacks a designated enoylreductase (ER) domain, the required activity is provided the enoyl reductase lepG. It is possible that the dehydrogenase lepF also participates in production of pre-leporin C. Cytochrome P450 monooxygenase lepH is then required for the ring expansion step to yield leporin C. Leporin C is then presumably further oxidized by the N-hydroxylase lepD to form leporin B. LepI may possess a function in biosynthesis upstream of lepA. Leporin B is further oxidized in the presence of ferric ion to give the leporin B trimer-iron chelate, but whether or not this reaction is catalyzed by an enzyme in the pathway or by ferric ion is not determined yet. This chain is O-methyltransferase lepI, found in Aspergillus flavus (strain ATCC 200026 / FGSC A1120 / IAM 13836 / NRRL 3357 / JCM 12722 / SRRC 167).